The primary structure comprises 112 residues: Large ribosomal subunit protein uL22 (112 aa).

The protein belongs to the universal ribosomal protein uL22 family. As to quaternary structure, part of the 50S ribosomal subunit.

Its function is as follows. This protein binds specifically to 23S rRNA; its binding is stimulated by other ribosomal proteins, e.g. L4, L17, and L20. It is important during the early stages of 50S assembly. It makes multiple contacts with different domains of the 23S rRNA in the assembled 50S subunit and ribosome. Functionally, the globular domain of the protein is located near the polypeptide exit tunnel on the outside of the subunit, while an extended beta-hairpin is found that lines the wall of the exit tunnel in the center of the 70S ribosome. The sequence is that of Large ribosomal subunit protein uL22 from Sulfurovum sp. (strain NBC37-1).